We begin with the raw amino-acid sequence, 105 residues long: Heat shock protein HspQ (105 aa).

Residues 74–105 are disordered; the sequence is SSELQDERPEQPSMDELAQTIRKQRQAPRLRN. The span at 95–105 shows a compositional bias: basic residues; sequence RKQRQAPRLRN.

The protein belongs to the HspQ family.

It is found in the cytoplasm. Involved in the degradation of certain denaturated proteins, including DnaA, during heat shock stress. The protein is Heat shock protein HspQ of Shigella dysenteriae serotype 1 (strain Sd197).